We begin with the raw amino-acid sequence, 409 residues long: DNA primase DnaG (409 aa).

Positions 175 to 261 (DAIIVVEGRA…EVEELTRKEI (87 aa)) constitute a Toprim domain. Mg(2+) contacts are provided by Glu-181, Asp-223, and Asp-225. Over residues 280-289 (ERPKDKEREK) the composition is skewed to basic and acidic residues. The segment at 280–322 (ERPKDKEREKGKKPKPKKRPERRGRPRKKKARPKRGPQERRLL) is disordered. Basic residues predominate over residues 290–314 (GKKPKPKKRPERRGRPRKKKARPKR).

Belongs to the archaeal DnaG primase family. Forms a ternary complex with MCM helicase and DNA. Component of the archaeal exosome complex. The cofactor is Mg(2+).

It catalyses the reaction ssDNA + n NTP = ssDNA/pppN(pN)n-1 hybrid + (n-1) diphosphate.. Functionally, RNA polymerase that catalyzes the synthesis of short RNA molecules used as primers for DNA polymerase during DNA replication. Also part of the exosome, which is a complex involved in RNA degradation. Acts as a poly(A)-binding protein that enhances the interaction between heteromeric, adenine-rich transcripts and the exosome. In Methanopyrus kandleri (strain AV19 / DSM 6324 / JCM 9639 / NBRC 100938), this protein is DNA primase DnaG.